The chain runs to 411 residues: Ornithine cyclodeaminase (411 aa).

NAD(+)-binding residues include asparagine 236, alanine 237, aspartate 315, threonine 347, methionine 348, leucine 349, histidine 350, aspartate 368, aspartate 391, and valine 392.

It belongs to the AgrE/ArgZ ornithine cyclodeaminase family. NAD(+) serves as cofactor.

The catalysed reaction is L-ornithine = L-proline + NH4(+). In terms of biological role, catalyzes the conversion of ornithine to proline, with the release of ammonia. This chain is Ornithine cyclodeaminase, found in Methanothermobacter thermautotrophicus (strain ATCC 29096 / DSM 1053 / JCM 10044 / NBRC 100330 / Delta H) (Methanobacterium thermoautotrophicum).